The chain runs to 415 residues: uncharacterized protein (415 aa).

Residue histidine 88 participates in Zn(2+) binding. Residue aspartate 90 is part of the active site. Zn(2+) is bound at residue aspartate 121. The active-site Proton acceptor is glutamate 155. Residues glutamate 156, aspartate 185, and histidine 392 each coordinate Zn(2+).

The protein belongs to the peptidase M20A family. Requires Zn(2+) as cofactor. Co(2+) serves as cofactor.

This is an uncharacterized protein from Methanococcus maripaludis (strain DSM 14266 / JCM 13030 / NBRC 101832 / S2 / LL).